Reading from the N-terminus, the 459-residue chain is Vacuolar cation/proton exchanger 3 (459 aa).

Residues 1-67 are Cytoplasmic-facing; sequence MGSIVEPWAA…TLKNILSNLQ (67 aa). The chain crosses the membrane as a helical span at residues 68 to 88; it reads EVILGTKLTLLFLAIPLAILA. At 89-95 the chain is on the extracellular side; sequence NSYNYGR. The chain crosses the membrane as a helical span at residues 96–116; it reads PLIFGLSLIGLTPLAERVSFL. At 117–129 the chain is on the cytoplasmic side; that stretch reads TEQLAFYTGPTVG. The chain crosses the membrane as a helical span at residues 130-150; that stretch reads GLLNATCGNATELIIAILALA. The segment at 137–172 is cation selection; the sequence is GNATELIIAILALANNKVAVVKYSLLGSILSNLLLV. The Extracellular segment spans residues 151-161; that stretch reads NNKVAVVKYSL. The chain crosses the membrane as a helical span at residues 162–182; the sequence is LGSILSNLLLVLGTSLFFGGI. The Cytoplasmic segment spans residues 183-195; the sequence is ANIRREQRFDRKQ. A helical membrane pass occupies residues 196 to 216; the sequence is ADVNFFLLLMGLLCHLLPLLL. The Extracellular segment spans residues 217–238; that stretch reads KYAATGEVSTSMINKMSLTLSR. A helical membrane pass occupies residues 239 to 259; the sequence is TSSIVMLIAYIAYLIFQLWTH. Over 260 to 283 the chain is Cytoplasmic; it reads RQLFEAQQDDDDAYDDEVSVEETP. A helical membrane pass occupies residues 284–304; the sequence is VIGFWSGFAWLVGMTIVIALL. The Extracellular portion of the chain corresponds to 305–327; it reads SEYVVDTIEDASDSWGLSVSFIS. Residues 328–348 form a helical membrane-spanning segment; it reads IILLPIVGNAAEHAGAIIFAF. Positions 335-370 are cation selection; sequence GNAAEHAGAIIFAFKNKLDISLGVALGSATQISLFV. At 349-362 the chain is on the cytoplasmic side; sequence KNKLDISLGVALGS. A helical membrane pass occupies residues 363–383; the sequence is ATQISLFVVPLSVIVAWILGI. Residues 384-386 are Extracellular-facing; that stretch reads KMD. The helical transmembrane segment at 387 to 407 threads the bilayer; sequence LNFNILETSSLALAIIITAFT. The Cytoplasmic portion of the chain corresponds to 408–417; the sequence is LQDGTSHYMK. A helical membrane pass occupies residues 418–438; sequence GLVLLLCYVIIAACFFVDQIP. Over 439–459 the chain is Extracellular; the sequence is QPNDLDVGLQPMNNLGEVFSA.

The protein belongs to the Ca(2+):cation antiporter (CaCA) (TC 2.A.19) family. Cation/proton exchanger (CAX) subfamily. Expressed in roots, stems and flowers.

It localises to the vacuole membrane. Inhibited by excess of Ca(2+). Functionally, vacuolar cation/proton exchanger (CAX). Translocates Ca(2+) and other metal ions into vacuoles using the proton gradient formed by H(+)-ATPase and H(+)-pyrophosphatase. Involved in ion homeostasis in association with CAX1. The protein is Vacuolar cation/proton exchanger 3 (CAX3) of Arabidopsis thaliana (Mouse-ear cress).